A 245-amino-acid chain; its full sequence is Mannose/glucose-specific lectin (245 aa).

A carbohydrate is bound by residues aspartate 87 and glycine 107. An N-linked (GlcNAc...) asparagine glycan is attached at asparagine 119. The Mn(2+) site is built by glutamate 129 and aspartate 131. Positions 131 and 133 each coordinate Ca(2+). Residues serine 138 and asparagine 139 each coordinate a carbohydrate. Ca(2+) is bound by residues asparagine 139 and aspartate 142. Residues aspartate 142 and histidine 147 each contribute to the Mn(2+) site. The a carbohydrate site is built by glycine 221, glutamate 222, and glutamine 223.

This sequence belongs to the leguminous lectin family. In terms of assembly, homodimer.

In terms of biological role, mannose/glucose-specific lectin that also binds derivatives N-acetyl-D-glucosamine and alpha-methyl-D-mannopyranoside with even higher affinity. Has hemagglutinating activity towards rabbit erythrocytes. Is toxic towards brine shrimp A.nauplii. In rats, induces dose-dependent paw edema. This chain is Mannose/glucose-specific lectin, found in Centrolobium tomentosum (Arariba).